The chain runs to 273 residues: Putative pyruvate, phosphate dikinase regulatory protein (273 aa).

Residue 149–156 (GPSRTSKT) participates in ADP binding.

This sequence belongs to the pyruvate, phosphate/water dikinase regulatory protein family. PDRP subfamily.

It carries out the reaction N(tele)-phospho-L-histidyl/L-threonyl-[pyruvate, phosphate dikinase] + ADP = N(tele)-phospho-L-histidyl/O-phospho-L-threonyl-[pyruvate, phosphate dikinase] + AMP + H(+). The catalysed reaction is N(tele)-phospho-L-histidyl/O-phospho-L-threonyl-[pyruvate, phosphate dikinase] + phosphate + H(+) = N(tele)-phospho-L-histidyl/L-threonyl-[pyruvate, phosphate dikinase] + diphosphate. Bifunctional serine/threonine kinase and phosphorylase involved in the regulation of the pyruvate, phosphate dikinase (PPDK) by catalyzing its phosphorylation/dephosphorylation. This chain is Putative pyruvate, phosphate dikinase regulatory protein, found in Rickettsia bellii (strain RML369-C).